We begin with the raw amino-acid sequence, 286 residues long: Bifunctional protein FolD (286 aa).

NADP(+) contacts are provided by residues 165-167 (GRS), Ser-190, and Val-231.

Belongs to the tetrahydrofolate dehydrogenase/cyclohydrolase family. Homodimer.

It catalyses the reaction (6R)-5,10-methylene-5,6,7,8-tetrahydrofolate + NADP(+) = (6R)-5,10-methenyltetrahydrofolate + NADPH. The catalysed reaction is (6R)-5,10-methenyltetrahydrofolate + H2O = (6R)-10-formyltetrahydrofolate + H(+). It functions in the pathway one-carbon metabolism; tetrahydrofolate interconversion. Functionally, catalyzes the oxidation of 5,10-methylenetetrahydrofolate to 5,10-methenyltetrahydrofolate and then the hydrolysis of 5,10-methenyltetrahydrofolate to 10-formyltetrahydrofolate. This is Bifunctional protein FolD from Bacillus cytotoxicus (strain DSM 22905 / CIP 110041 / 391-98 / NVH 391-98).